A 241-amino-acid chain; its full sequence is Ubiquinone biosynthesis O-methyltransferase (241 aa).

Residues Arg44, Gly64, Asp85, and Met129 each contribute to the S-adenosyl-L-methionine site.

Belongs to the methyltransferase superfamily. UbiG/COQ3 family.

The enzyme catalyses a 3-demethylubiquinol + S-adenosyl-L-methionine = a ubiquinol + S-adenosyl-L-homocysteine + H(+). It carries out the reaction a 3-(all-trans-polyprenyl)benzene-1,2-diol + S-adenosyl-L-methionine = a 2-methoxy-6-(all-trans-polyprenyl)phenol + S-adenosyl-L-homocysteine + H(+). It functions in the pathway cofactor biosynthesis; ubiquinone biosynthesis. O-methyltransferase that catalyzes the 2 O-methylation steps in the ubiquinone biosynthetic pathway. The sequence is that of Ubiquinone biosynthesis O-methyltransferase from Serratia proteamaculans (strain 568).